The sequence spans 306 residues: Protease HtpX homolog (306 aa).

The next 2 helical transmembrane spans lie at 10–30 and 33–53; these read TTLL…ATGG and QTLS…YWFS. H135 lines the Zn(2+) pocket. E136 is a catalytic residue. H139 is a Zn(2+) binding site. Transmembrane regions (helical) follow at residues 149-169 and 181-201; these read AIAS…MYFG and GLGL…ASLI. E210 is a binding site for Zn(2+).

It belongs to the peptidase M48B family. Requires Zn(2+) as cofactor.

It is found in the cell membrane. This chain is Protease HtpX homolog, found in Bifidobacterium longum (strain NCC 2705).